The sequence spans 248 residues: MHPMNRYEVALVTGASSGIGKAIALELASAGLRVLALGRDRAALDELHSTAGIVPVVFDLSDVSEVYGKIAGEKIDVLVNNAGLLTASASLVDLSEDDIDAMIDINIRSVFKLTRHVLKQMIERRRGHIFFTGSSGGLAPHPNSSVYGATKAAVSLFSSALRCDLIGLPIRVTELFPGRVETNLYRTALGKEGAKKKLYDDNEAIQPEHMARLLRTALELPDFVDVTRLEVMPTGQVVGGAQMSKLSR.

8–32 (EVALVTGASSGIGKAIALELASAGL) contributes to the NADP(+) binding site. A substrate-binding site is contributed by Ser134. Tyr147 serves as the catalytic Proton acceptor.

Belongs to the short-chain dehydrogenases/reductases (SDR) family.

This is an uncharacterized protein from Sinorhizobium fredii (strain NBRC 101917 / NGR234).